A 149-amino-acid polypeptide reads, in one-letter code: UPF0178 protein HEAR0259 (149 aa).

The protein belongs to the UPF0178 family.

The protein is UPF0178 protein HEAR0259 of Herminiimonas arsenicoxydans.